The chain runs to 251 residues: NADPH-dependent oxidoreductase (251 aa).

Belongs to the flavin oxidoreductase frp family. Requires FMN as cofactor.

Its function is as follows. Reduces FMN, organic nitro compounds and disulfide DTNB. Involved in maintenance of the cellular redox state and the disulfide stress response. This is NADPH-dependent oxidoreductase (nfrA) from Staphylococcus epidermidis (strain ATCC 12228 / FDA PCI 1200).